A 322-amino-acid chain; its full sequence is Quinolinate synthase (322 aa).

Residues H37 and S54 each coordinate iminosuccinate. C99 is a binding site for [4Fe-4S] cluster. Residues 125 to 127 (YVN) and S142 each bind iminosuccinate. A [4Fe-4S] cluster-binding site is contributed by C185. Iminosuccinate contacts are provided by residues 211–213 (HPE) and T228. C278 contributes to the [4Fe-4S] cluster binding site.

The protein belongs to the quinolinate synthase family. Type 2 subfamily. [4Fe-4S] cluster serves as cofactor.

The protein resides in the cytoplasm. It carries out the reaction iminosuccinate + dihydroxyacetone phosphate = quinolinate + phosphate + 2 H2O + H(+). It functions in the pathway cofactor biosynthesis; NAD(+) biosynthesis; quinolinate from iminoaspartate: step 1/1. Functionally, catalyzes the condensation of iminoaspartate with dihydroxyacetone phosphate to form quinolinate. The chain is Quinolinate synthase from Chlorobaculum tepidum (strain ATCC 49652 / DSM 12025 / NBRC 103806 / TLS) (Chlorobium tepidum).